Reading from the N-terminus, the 391-residue chain is GATA-binding factor 6-B (391 aa).

Positions 57-69 (GTHSVNSHWSQAT) are enriched in polar residues. The disordered stretch occupies residues 57 to 107 (GTHSVNSHWSQATSESSSYSSSSPHPSSRYHYSPSPPMANGSTRDTGYSSS). Residues 70-89 (SESSSYSSSSPHPSSRYHYS) show a composition bias toward low complexity. Residues 96–107 (NGSTRDTGYSSS) are compositionally biased toward polar residues. GATA-type zinc fingers lie at residues 182–206 (CVNCGSVQTPLWRRDGTGHYLCNAC) and 236–260 (CANCHTTTTTLWRRNTEGEPVCNAC). Positions 277-334 (KEGIQTRKRKPKNLNKSKSSSSNGNSSHHITMTPTSTTSSTNSDDCIKNGSPSQNTAP) are disordered. Basic residues predominate over residues 282–291 (TRKRKPKNLN). A compositionally biased stretch (low complexity) spans 292-319 (KSKSSSSNGNSSHHITMTPTSTTSSTNS).

In terms of tissue distribution, in embryos, expressed in the presumptive heart mesoderm. In adults, widely distributed but predominant in the heart.

The protein localises to the nucleus. Its function is as follows. Transcriptional activator that binds 5'-GATA-3'-containing motifs within gene promoters. Regulates cardiac-specific transcription during embryogenesis and thereby cardiogenesis. This Xenopus laevis (African clawed frog) protein is GATA-binding factor 6-B (gata6-b).